The following is a 649-amino-acid chain: Threonine--tRNA ligase (649 aa).

Residues 1–66 enclose the TGS domain; that stretch reads MVQITLPDGS…DNDAQLAIVT (66 aa). The tract at residues 247-538 is catalytic; it reads DHRKIGRELD…LIENHAGAMP (292 aa). Cys-338, His-389, and His-515 together coordinate Zn(2+).

Belongs to the class-II aminoacyl-tRNA synthetase family. As to quaternary structure, homodimer. Requires Zn(2+) as cofactor.

It is found in the cytoplasm. The catalysed reaction is tRNA(Thr) + L-threonine + ATP = L-threonyl-tRNA(Thr) + AMP + diphosphate + H(+). Functionally, catalyzes the attachment of threonine to tRNA(Thr) in a two-step reaction: L-threonine is first activated by ATP to form Thr-AMP and then transferred to the acceptor end of tRNA(Thr). Also edits incorrectly charged L-seryl-tRNA(Thr). This Bordetella bronchiseptica (strain ATCC BAA-588 / NCTC 13252 / RB50) (Alcaligenes bronchisepticus) protein is Threonine--tRNA ligase.